The primary structure comprises 206 residues: Venom allergen 5 2 (206 aa).

Intrachain disulfides connect Cys-4–Cys-16, Cys-8–Cys-104, Cys-28–Cys-96, and Cys-172–Cys-189. One can recognise an SCP domain in the interval 48-191 (DEHNRFRQKV…MKSHYLVCNY (144 aa)).

It belongs to the CRISP family. Venom allergen 5-like subfamily. In terms of tissue distribution, expressed by the venom gland.

It localises to the secreted. The sequence is that of Venom allergen 5 2 from Polybia paulista (Neotropical social wasp).